The sequence spans 268 residues: Trans-aconitate 2-methyltransferase (268 aa).

The protein belongs to the methyltransferase superfamily. Tam family.

The protein localises to the cytoplasm. The catalysed reaction is trans-aconitate + S-adenosyl-L-methionine = (E)-3-(methoxycarbonyl)pent-2-enedioate + S-adenosyl-L-homocysteine. Catalyzes the S-adenosylmethionine monomethyl esterification of trans-aconitate. This chain is Trans-aconitate 2-methyltransferase, found in Delftia acidovorans (strain DSM 14801 / SPH-1).